The following is a 528-amino-acid chain: Ivanolysin (528 aa).

An N-terminal signal peptide occupies residues M1–Q23. 4 beta stranded membrane-spanning segments follow: residues E213–A226, V233–K242, S311–T320, and K328–A340. The short motif at E482–R492 is the Conserved undecapeptide element. Residues T514–L515 carry the Cholesterol binding motif.

Belongs to the cholesterol-dependent cytolysin family. As to quaternary structure, homooligomeric pore complex of 35 to 50 subunits; when inserted in the host membrane.

The protein localises to the secreted. It is found in the host membrane. Its function is as follows. A cholesterol-dependent toxin that causes cytolysis by forming pores in cholesterol containing host membranes. After binding to target membranes, the protein undergoes a major conformation change, leading to its insertion in the host membrane and formation of an oligomeric pore complex. Cholesterol is required for binding to host membranes, membrane insertion and pore formation; cholesterol binding is mediated by a Thr-Leu pair in the C-terminus. Can be reversibly inactivated by oxidation. The protein is Ivanolysin (ilo) of Listeria ivanovii.